The following is a 292-amino-acid chain: 4-hydroxy-tetrahydrodipicolinate synthase (292 aa).

Thr45 lines the pyruvate pocket. Residue Tyr133 is the Proton donor/acceptor of the active site. Lys161 acts as the Schiff-base intermediate with substrate in catalysis. Ile203 is a binding site for pyruvate.

This sequence belongs to the DapA family. As to quaternary structure, homotetramer; dimer of dimers.

It localises to the cytoplasm. It catalyses the reaction L-aspartate 4-semialdehyde + pyruvate = (2S,4S)-4-hydroxy-2,3,4,5-tetrahydrodipicolinate + H2O + H(+). The protein operates within amino-acid biosynthesis; L-lysine biosynthesis via DAP pathway; (S)-tetrahydrodipicolinate from L-aspartate: step 3/4. Its function is as follows. Catalyzes the condensation of (S)-aspartate-beta-semialdehyde [(S)-ASA] and pyruvate to 4-hydroxy-tetrahydrodipicolinate (HTPA). The chain is 4-hydroxy-tetrahydrodipicolinate synthase from Sodalis glossinidius (strain morsitans).